A 286-amino-acid polypeptide reads, in one-letter code: MTKEVVGDKRSFSGKDYQDPPPEPLFDATELGKWSFYRALIAEFIATLLFLYVTIMTVIGYKSQTDPALNPDQCTGVGVLGIAWAFGGMIFILVYCTAGISGGHINPAVTFGLLLARKVTLVRAVMYMVAQCLGAICGVALVKAFQSAYFTRYGGGANGLSDGYSIGTGVAAEIIGTFVLVYTVFSATDPKRSARDSHVPVLAPLPIGFAVFIVHLATIPITGTGINPARSLGAAIIYNKDKAWDHHWIFWVGPFAGAAIAAFYHQFVLRAGAIKALGSFRSQPHV.

N-acetylmethionine is present on M1. Residues 1–18 (MTKEVVGDKRSFSGKDYQ) show a composition bias toward basic and acidic residues. The interval 1 to 23 (MTKEVVGDKRSFSGKDYQDPPPE) is disordered. Residues 1 to 38 (MTKEVVGDKRSFSGKDYQDPPPEPLFDATELGKWSFYR) are Cytoplasmic-facing. K3 bears the N6,N6-dimethyllysine mark. A helical transmembrane segment spans residues 39–59 (ALIAEFIATLLFLYVTIMTVI). Residues 60-75 (GYKSQTDPALNPDQCT) lie on the Extracellular side of the membrane. A helical transmembrane segment spans residues 76-96 (GVGVLGIAWAFGGMIFILVYC). Residues 97–124 (TAGISGGHINPAVTFGLLLARKVTLVRA) are Cytoplasmic-facing. Residues 106 to 108 (NPA) carry the NPA 1 motif. Residues 125 to 145 (VMYMVAQCLGAICGVALVKAF) traverse the membrane as a helical segment. Topologically, residues 146–165 (QSAYFTRYGGGANGLSDGYS) are extracellular. The chain crosses the membrane as a helical span at residues 166-186 (IGTGVAAEIIGTFVLVYTVFS). Residues 187–200 (ATDPKRSARDSHVP) are Cytoplasmic-facing. Residues 201 to 221 (VLAPLPIGFAVFIVHLATIPI) traverse the membrane as a helical segment. Residues 222–248 (TGTGINPARSLGAAIIYNKDKAWDHHW) are Extracellular-facing. An NPA 2 motif is present at residues 227–229 (NPA). The chain crosses the membrane as a helical span at residues 249 to 269 (IFWVGPFAGAAIAAFYHQFVL). At 270–286 (RAGAIKALGSFRSQPHV) the chain is on the cytoplasmic side. S279 and S282 each carry phosphoserine.

The protein belongs to the MIP/aquaporin (TC 1.A.8) family. PIP (TC 1.A.8.11) subfamily. As to expression, expressed in green siliques.

The protein localises to the cell membrane. Functionally, aquaporins facilitate the transport of water and small neutral solutes across cell membranes. This chain is Probable aquaporin PIP2-5 (PIP2-5), found in Arabidopsis thaliana (Mouse-ear cress).